Reading from the N-terminus, the 85-residue chain is Large ribosomal subunit protein bL27 (85 aa).

Residues Met1 to Arg20 form a disordered region.

This sequence belongs to the bacterial ribosomal protein bL27 family.

The chain is Large ribosomal subunit protein bL27 from Herminiimonas arsenicoxydans.